The primary structure comprises 305 residues: Acyl transferase (305 aa).

Residues S114, D211, and H241 each act as charge relay system in the active site.

Belongs to the LuxD family.

It participates in lipid metabolism; fatty acid reduction for biolumincescence. Functionally, acyl transferase is part of the fatty acid reductase system required for aldehyde biosynthesis; it produces fatty acids for the luminescent reaction. The sequence is that of Acyl transferase (luxD) from Vibrio harveyi (Beneckea harveyi).